The primary structure comprises 82 residues: UPF0213 protein MW0443 (82 aa).

The GIY-YIG domain occupies 2–77; sequence DSHFVYIVKC…KTYTRQKKLR (76 aa).

It belongs to the UPF0213 family.

This is UPF0213 protein MW0443 from Staphylococcus aureus (strain MW2).